The chain runs to 573 residues: Glutamate--tRNA ligase (573 aa).

The 'HIGH' region motif lies at 106–116; the sequence is PNPDGAFHLGN.

The protein belongs to the class-I aminoacyl-tRNA synthetase family. Glutamate--tRNA ligase type 2 subfamily.

It localises to the cytoplasm. It catalyses the reaction tRNA(Glu) + L-glutamate + ATP = L-glutamyl-tRNA(Glu) + AMP + diphosphate. Its function is as follows. Catalyzes the attachment of glutamate to tRNA(Glu) in a two-step reaction: glutamate is first activated by ATP to form Glu-AMP and then transferred to the acceptor end of tRNA(Glu). In Thermococcus onnurineus (strain NA1), this protein is Glutamate--tRNA ligase.